Here is a 163-residue protein sequence, read N- to C-terminus: 3-hydroxyacyl-[acyl-carrier-protein] dehydratase FabZ (163 aa).

Residue H58 is part of the active site.

The protein belongs to the thioester dehydratase family. FabZ subfamily.

Its subcellular location is the cytoplasm. The enzyme catalyses a (3R)-hydroxyacyl-[ACP] = a (2E)-enoyl-[ACP] + H2O. Involved in unsaturated fatty acids biosynthesis. Catalyzes the dehydration of short chain beta-hydroxyacyl-ACPs and long chain saturated and unsaturated beta-hydroxyacyl-ACPs. The sequence is that of 3-hydroxyacyl-[acyl-carrier-protein] dehydratase FabZ from Francisella philomiragia subsp. philomiragia (strain ATCC 25017 / CCUG 19701 / FSC 153 / O#319-036).